We begin with the raw amino-acid sequence, 113 residues long: MTKINENVAIQFVKGENEKDQPEIRLFRNLDGKNGKAVYKFYKPTTITLTNYKSVQRMFLIDSEGVLSTKKIDLSISEDHVKEVKSTYSWNSEEAFERFMRFASRYANSLSKN.

This sequence belongs to the Psb28 family. Part of the photosystem II complex.

It localises to the cellular thylakoid membrane. The polypeptide is Photosystem II reaction center Psb28 protein (Prochlorococcus marinus (strain NATL1A)).